A 369-amino-acid polypeptide reads, in one-letter code: Anhydro-N-acetylmuramic acid kinase (369 aa).

An ATP-binding site is contributed by 12 to 19 (GTSLDGVD).

Belongs to the anhydro-N-acetylmuramic acid kinase family.

It carries out the reaction 1,6-anhydro-N-acetyl-beta-muramate + ATP + H2O = N-acetyl-D-muramate 6-phosphate + ADP + H(+). The protein operates within amino-sugar metabolism; 1,6-anhydro-N-acetylmuramate degradation. It participates in cell wall biogenesis; peptidoglycan recycling. In terms of biological role, catalyzes the specific phosphorylation of 1,6-anhydro-N-acetylmuramic acid (anhMurNAc) with the simultaneous cleavage of the 1,6-anhydro ring, generating MurNAc-6-P. Is required for the utilization of anhMurNAc either imported from the medium or derived from its own cell wall murein, and thus plays a role in cell wall recycling. The sequence is that of Anhydro-N-acetylmuramic acid kinase from Escherichia coli O8 (strain IAI1).